Reading from the N-terminus, the 447-residue chain is Phosphoglucosamine mutase (447 aa).

Ser-100 (phosphoserine intermediate) is an active-site residue. 4 residues coordinate Mg(2+): Ser-100, Asp-239, Asp-241, and Asp-243. At Ser-100 the chain carries Phosphoserine.

It belongs to the phosphohexose mutase family. It depends on Mg(2+) as a cofactor. Post-translationally, activated by phosphorylation.

The catalysed reaction is alpha-D-glucosamine 1-phosphate = D-glucosamine 6-phosphate. Its function is as follows. Catalyzes the conversion of glucosamine-6-phosphate to glucosamine-1-phosphate. This Thermoanaerobacter sp. (strain X514) protein is Phosphoglucosamine mutase.